The primary structure comprises 348 residues: MNGTEGPNFYVPFSNKTGVVRSPFEYPQYYLAEPWQFSMLAAYMFLLIVLGFPINFLTLYVTVQHKNVRTPLNYILLNLAVANHFMVFGGFTTTLYTSLHGYFVFGSTGCNLEGFFATLGGEIALWSLVVLAIERYVVVCKPMSNFRFGENHAIMGVAFTWVMALACAAPPLVGWSRYIPEGMQCSCGIDYYTLKPEVNNESFVIYMFVVHFTIPMTIIFFCYGQLVFTVKEAAAQQQESATTQKAEKEVTRMVIIMVIAFLICWVPYASVAFYIFTHQGSDFGPILMTLPAFFAKSSAIYNPVIYIMMNKQFRNCMLTTICCGKNPFGEEEGSTTASKTETSQVAPA.

Position 1 is an N-acetylmethionine (Met1). Residues 1–36 (MNGTEGPNFYVPFSNKTGVVRSPFEYPQYYLAEPWQ) lie on the Extracellular side of the membrane. Asn2 and Asn15 each carry an N-linked (GlcNAc...) asparagine glycan. A helical transmembrane segment spans residues 37–61 (FSMLAAYMFLLIVLGFPINFLTLYV). Over 62 to 73 (TVQHKNVRTPLN) the chain is Cytoplasmic. Residues 74-96 (YILLNLAVANHFMVFGGFTTTLY) traverse the membrane as a helical segment. Residues 97–110 (TSLHGYFVFGSTGC) are Extracellular-facing. Cys110 and Cys187 form a disulfide bridge. Residues 111–133 (NLEGFFATLGGEIALWSLVVLAI) form a helical membrane-spanning segment. The 'Ionic lock' involved in activated form stabilization motif lies at 134–136 (ERY). The Cytoplasmic portion of the chain corresponds to 134–152 (ERYVVVCKPMSNFRFGENH). Residues 153-173 (AIMGVAFTWVMALACAAPPLV) form a helical membrane-spanning segment. Residues 174-202 (GWSRYIPEGMQCSCGIDYYTLKPEVNNES) lie on the Extracellular side of the membrane. Glu201 is a binding site for Zn(2+). The chain crosses the membrane as a helical span at residues 203 to 224 (FVIYMFVVHFTIPMTIIFFCYG). The Cytoplasmic segment spans residues 225–252 (QLVFTVKEAAAQQQESATTQKAEKEVTR). Residues 253 to 274 (MVIIMVIAFLICWVPYASVAFY) form a helical membrane-spanning segment. Residues 275 to 286 (IFTHQGSDFGPI) lie on the Extracellular side of the membrane. Zn(2+) is bound at residue Gln279. Residues 287 to 308 (LMTLPAFFAKSSAIYNPVIYIM) traverse the membrane as a helical segment. The residue at position 296 (Lys296) is an N6-(retinylidene)lysine. Topologically, residues 309–348 (MNKQFRNCMLTTICCGKNPFGEEEGSTTASKTETSQVAPA) are cytoplasmic. Residues Cys322 and Cys323 are each lipidated (S-palmitoyl cysteine). Positions 330–348 (EEEGSTTASKTETSQVAPA) are interaction with SAG. Ser334 is modified (phosphoserine). Residues Thr335 and Thr336 each carry the phosphothreonine modification. Ser338 carries the post-translational modification Phosphoserine. Residues Thr340 and Thr342 each carry the phosphothreonine modification. Position 343 is a phosphoserine (Ser343).

Belongs to the G-protein coupled receptor 1 family. Opsin subfamily. As to quaternary structure, homodimer. May form a complex composed of RHO, GRK1 and RCVRN in a Ca(2+)-dependent manner; RCVRN prevents the interaction between GRK1 and RHO. Interacts with GRK1. Interacts (phosphorylated form) with SAG. Interacts with GNAT1. Interacts with GNAT3. SAG and G-proteins compete for a common binding site. Interacts with PRCD; the interaction promotes PRCD stability. Forms a complex with ASAP1 and ARF4. Forms a complex with ASAP1, RAB11A, Rabin8/RAB3IP, ARF4 and RAB11FIP3; the complex regulates Golgi-to-cilia rhodopsin/RHO transport in photoreceptors. In terms of processing, phosphorylated on some or all of the serine and threonine residues present in the C-terminal region. Post-translationally, contains one covalently linked retinal chromophore. Upon light absorption, the covalently bound 11-cis-retinal is converted to all-trans-retinal. After hydrolysis of the Schiff base and release of the covalently bound all-trans-retinal, active rhodopsin is regenerated by binding of a fresh molecule of 11-cis-retinal.

The protein localises to the membrane. It localises to the cell projection. The protein resides in the cilium. Its subcellular location is the photoreceptor outer segment. Its function is as follows. Photoreceptor required for image-forming vision at low light intensity. Required for photoreceptor cell viability after birth. Light-induced isomerization of 11-cis to all-trans retinal triggers a conformational change that activates signaling via G-proteins. Subsequent receptor phosphorylation mediates displacement of the bound G-protein alpha subunit by the arrestin SAG and terminates signaling. In Loxodonta africana (African elephant), this protein is Rhodopsin (RHO).